The chain runs to 471 residues: Thymidine phosphorylase (471 aa).

Over residues 1-10 (MAAPGTPPPS) the composition is skewed to pro residues. The segment at 1–21 (MAAPGTPPPSASGGGGGEPRQ) is disordered. At Thr6 the chain carries Phosphothreonine. Substrate-binding residues include His102, Arg188, Ser203, and Lys207.

Belongs to the thymidine/pyrimidine-nucleoside phosphorylase family. In terms of assembly, homodimer.

It carries out the reaction thymidine + phosphate = 2-deoxy-alpha-D-ribose 1-phosphate + thymine. It functions in the pathway pyrimidine metabolism; dTMP biosynthesis via salvage pathway; dTMP from thymine: step 1/2. Functionally, catalyzes the reversible phosphorolysis of thymidine. The produced molecules are then utilized as carbon and energy sources or in the rescue of pyrimidine bases for nucleotide synthesis. The protein is Thymidine phosphorylase (Tymp) of Mus musculus (Mouse).